The primary structure comprises 265 residues: MLLAIDVGNTNIVLGLYADEPAEGADPVLVRDWRMRTEPRMTADELALTVRGLLGSYADRITGISALSTVPSLLRELRVMLGRYWTDVPRVVVEPGVRTGVPLLVDNPKEVGADRVINTLAAHHLHATNCVVVDFGTSTNIDAISAKGEFLGGAFAPGIEISLDALASRAAQLRKVELVRPRSVIGKNTVECLQSGILYGFAGQVDGLVRRIVAELESTHGGPTTVIGTGGLAPLVVTESDTISHHVPDLTLLGLRLVYDRNFGS.

An ATP-binding site is contributed by 6-13; that stretch reads DVGNTNIV. 112-115 contacts substrate; the sequence is GADR. Aspartate 114 functions as the Proton acceptor in the catalytic mechanism. Aspartate 134 contacts K(+). Residue threonine 137 coordinates ATP. Residue threonine 189 participates in substrate binding.

The protein belongs to the type III pantothenate kinase family. As to quaternary structure, homodimer. It depends on NH4(+) as a cofactor. K(+) is required as a cofactor.

The protein resides in the cytoplasm. The enzyme catalyses (R)-pantothenate + ATP = (R)-4'-phosphopantothenate + ADP + H(+). Its pathway is cofactor biosynthesis; coenzyme A biosynthesis; CoA from (R)-pantothenate: step 1/5. Its function is as follows. Catalyzes the phosphorylation of pantothenate (Pan), the first step in CoA biosynthesis. This is Type III pantothenate kinase from Saccharopolyspora erythraea (strain ATCC 11635 / DSM 40517 / JCM 4748 / NBRC 13426 / NCIMB 8594 / NRRL 2338).